The chain runs to 1523 residues: Rho GTPase-activating protein gacHH (1523 aa).

Kelch repeat units follow at residues 30 to 76 (DIVI…YGHS), 83 to 133 (KMFV…LIYD), and 135 to 184 (YILI…DISP). Polar residues-rich tracts occupy residues 161-173 (NSWTKPSSNSSTG) and 184-194 (PRSSTTTPTHQ). Positions 161 to 256 (NSWTKPSSNS…GGSPMTTPPT (96 aa)) are disordered. Low complexity predominate over residues 195–211 (SVNGSNSNSSSSSRVRS). Residues 212–221 (ATISSHNNSP) are compositionally biased toward polar residues. Residues 227–244 (NNNNNNNNNSNNSNNSNN) are compositionally biased toward low complexity. Kelch repeat units lie at residues 335–384 (KAFI…AIGS), 386–441 (LFIF…PISS), and 443–496 (ILII…PITS). Disordered stretches follow at residues 510–569 (LPHL…DNIN), 609–631 (QSIDRNGGSGGGSGGGNGVVSND), and 647–671 (NKNNNNNNNNNSGGSNLSISSNSGS). The segment covering 615 to 626 (GGSGGGSGGGNG) has biased composition (gly residues). Residues 690 to 729 (CIKKYNSLKDSYLELKQKYQEEREKRLELEKELERYRLSS) are a coiled coil. The tract at residues 748-786 (NINSNNSTTTTTTTTTTTTTPIPLSTSNNNNNNNNNSTL) is disordered. Residues 812–840 (YEKRVKWKENTEKEANQQLEVIKSKIDLF) are a coiled coil. Disordered regions lie at residues 861-881 (SENINGDHNQQQQQQQQQNPQ), 905-927 (LTPRKSRENSVHHSRSVSNPIPL), 963-991 (TPQKPPQQPQQQQQQQPPQENGKEPSKST), 1006-1096 (SGHF…RLGK), and 1143-1194 (NGAN…SERI). Positions 870 to 881 (QQQQQQQQQNPQ) are enriched in low complexity. Residues 905-915 (LTPRKSRENSV) are compositionally biased toward basic and acidic residues. Low complexity-rich tracts occupy residues 971–981 (PQQQQQQQPPQ), 1012–1030 (SSSNESSNSEETTPTFSNN), 1043–1079 (QHQQQTNIGSNSISNINTSNSTTSLSSSVSSTSLQTQ), and 1143–1153 (NGANNLGGLVL). A coiled-coil region spans residues 1151–1228 (LVLTSDKEKE…KKHKKIKGLF (78 aa)). Over residues 1155-1194 (SDKEKEKLEKEREKSERIEREKQEKEREKLEKEREKSERI) the composition is skewed to basic and acidic residues. One can recognise a Rho-GAP domain in the interval 1233–1411 (SNKESLPFRR…TFIEDFHYIF (179 aa)). The tract at residues 1425–1482 (DDDYDSSSFGSNNTPSSHSPHSSSPTLNPAVTTTTTTTTTTNTTTTTNTTTTPTSATI) is disordered. Residues 1430–1476 (SSSFGSNNTPSSHSPHSSSPTLNPAVTTTTTTTTTTNTTTTTNTTTT) show a composition bias toward low complexity.

The protein resides in the cytoplasm. Functionally, rho GTPase-activating protein involved in the signal transduction pathway. The sequence is that of Rho GTPase-activating protein gacHH (gacHH) from Dictyostelium discoideum (Social amoeba).